Consider the following 166-residue polypeptide: Small ribosomal subunit protein uS5 (166 aa).

One can recognise an S5 DRBM domain in the interval 11 to 74 (LQEKLIAVNR…EKARRNMINV (64 aa)).

Belongs to the universal ribosomal protein uS5 family. As to quaternary structure, part of the 30S ribosomal subunit. Contacts proteins S4 and S8.

Functionally, with S4 and S12 plays an important role in translational accuracy. Located at the back of the 30S subunit body where it stabilizes the conformation of the head with respect to the body. In Actinobacillus pleuropneumoniae serotype 5b (strain L20), this protein is Small ribosomal subunit protein uS5.